The following is a 374-amino-acid chain: RNA binding protein fox-1 homolog 3 (374 aa).

Pro residues predominate over residues 1–29 (MAQPYPPAQYPPPPQNGIPAEYAPPPPHP). The tract at residues 1–105 (MAQPYPPAQY…QQPKRLHVSN (105 aa)) is disordered. Positions 49 to 74 (TPAQTHPEQPGTEASTQPIAGTQTVP) are enriched in polar residues. Residues 99–175 (KRLHVSNIPF…RKIEVNNATA (77 aa)) enclose the RRM domain. Arginine 223 carries the asymmetric dimethylarginine; alternate modification. Arginine 223 carries the omega-N-methylarginine; alternate modification. Arginine 319 carries the post-translational modification Asymmetric dimethylarginine.

In terms of processing, phosphorylated. As to expression, widely expressed in brain, including in cerebral cortex, hippocampus, thalamus, caudate/putamen, cerebellum, as well as in the spinal cord (at protein level). Not expressed in all neuronal cells within a region, in cerebellum, expression is absent in Purkinje cells (at protein level). Expressed in the retina in the ganglion cells and some cells in the inner nuclear layer, but absent from the photoreceptor cells and most cells in the inner nuclear layer (at protein level).

Its subcellular location is the nucleus. The protein localises to the cytoplasm. Pre-mRNA alternative splicing regulator. Regulates alternative splicing of RBFOX2 to enhance the production of mRNA species that are targeted for nonsense-mediated decay (NMD). This is RNA binding protein fox-1 homolog 3 (Rbfox3) from Mus musculus (Mouse).